Reading from the N-terminus, the 165-residue chain is Cyclic pyranopterin monophosphate synthase (165 aa).

Substrate is bound by residues 79–81 and 117–118; these read LCH and ME. Residue aspartate 132 is part of the active site.

Belongs to the MoaC family. In terms of assembly, homohexamer; trimer of dimers.

It carries out the reaction (8S)-3',8-cyclo-7,8-dihydroguanosine 5'-triphosphate = cyclic pyranopterin phosphate + diphosphate. Its pathway is cofactor biosynthesis; molybdopterin biosynthesis. Catalyzes the conversion of (8S)-3',8-cyclo-7,8-dihydroguanosine 5'-triphosphate to cyclic pyranopterin monophosphate (cPMP). In Chloroflexus aggregans (strain MD-66 / DSM 9485), this protein is Cyclic pyranopterin monophosphate synthase.